Reading from the N-terminus, the 502-residue chain is Maturase K (502 aa).

It belongs to the intron maturase 2 family. MatK subfamily.

Its subcellular location is the plastid. The protein localises to the chloroplast. In terms of biological role, usually encoded in the trnK tRNA gene intron. Probably assists in splicing its own and other chloroplast group II introns. This Theobroma cacao (Cacao) protein is Maturase K.